The sequence spans 410 residues: Putative transporter AmpG 1 (410 aa).

A run of 12 helical transmembrane segments spans residues 5–25, 40–60, 76–96, 98–118, 141–161, 169–189, 217–237, 265–285, 290–310, 320–340, 356–378, and 383–402; these read LSIIWLFGLISGFNIMITGNT, IGLLSLITLPYSINFLFAPIF, LSWICLTSIALVFFVYILSFL, PFDNLLLFASISLIISFFSSM, GIYIFGYRFGMLLANSGAIYL, EIYKIFAILIFIYLILLIVGV, ILKPIGSISFIILILIFLILY, VGKFWGVMGAIVGGLLGGFIM, ILDSILLFGIIHALAHILFII, LLFITIGAESITGGMTMTAYI, YSFFSSMMGISRSIFPIISGYIV, and WQNFFLFTTIITIPSLLVLL.

The protein belongs to the major facilitator superfamily.

It is found in the cell inner membrane. The chain is Putative transporter AmpG 1 (ampG1) from Rickettsia bellii (strain RML369-C).